The primary structure comprises 385 residues: Prostacyclin receptor (385 aa).

The Extracellular portion of the chain corresponds to Met-1–Gly-16. Disulfide bonds link Cys-5-Cys-165 and Cys-92-Cys-170. N-linked (GlcNAc...) asparagine glycosylation is present at Asn-7. Residues Pro-17–Leu-38 form a helical membrane-spanning segment. Over Gly-39–Val-51 the chain is Cytoplasmic. The helical transmembrane segment at Leu-52–Ala-76 threads the bilayer. The Extracellular portion of the chain corresponds to Arg-77–Ala-94. Residues Phe-95–Val-115 form a helical membrane-spanning segment. Residues Glu-116 to Arg-134 are Cytoplasmic-facing. Residues Arg-135–Leu-158 traverse the membrane as a helical segment. Topologically, residues Gly-159–Gly-181 are extracellular. A helical membrane pass occupies residues Cys-182 to Leu-208. At Ser-209 to Val-234 the chain is on the cytoplasmic side. A helical transmembrane segment spans residues Asp-235 to Arg-259. Over Gly-260 to Gly-273 the chain is Extracellular. Residues Asp-274–Leu-294 traverse the membrane as a helical segment. The Cytoplasmic segment spans residues Phe-295–Cys-385. The tract at residues Ala-315–Gly-344 is disordered. The span at Asp-318–Ser-328 shows a compositional bias: polar residues. Cys-382 carries the cysteine methyl ester modification. The S-farnesyl cysteine moiety is linked to residue Cys-382. The propeptide at Ser-383 to Cys-385 is removed in mature form.

The protein belongs to the G-protein coupled receptor 1 family. In terms of assembly, interacts (non-isoprenylated C-terminus) with PDZK1. In terms of processing, isoprenylation does not influence ligand binding but is required for efficient coupling to the effectors adenylyl cyclase and phospholipase C.

It is found in the cell membrane. In terms of biological role, receptor for prostacyclin (prostaglandin I2 or PGI2). The activity of this receptor is mediated by G(s) proteins which activate adenylate cyclase. In Bos taurus (Bovine), this protein is Prostacyclin receptor (PTGIR).